The primary structure comprises 77 residues: Blood-induced peptide 1 (77 aa).

Residues 38–71 (EDFLHQENSELKKSLKNLEMENEKLKNILKTDYN) are a coiled coil.

Its function is as follows. Plays an important role in survival in host blood through increasing tolerance to stresses such as heat, salt, or cycloheximide, which is essential for virulence. The protein is Blood-induced peptide 1 of Candida albicans (strain SC5314 / ATCC MYA-2876) (Yeast).